Reading from the N-terminus, the 275-residue chain is NADH-quinone oxidoreductase subunit E 1 (275 aa).

Cys-99, Cys-104, Cys-140, and Cys-144 together coordinate [2Fe-2S] cluster. Residues 200–275 (LQAPEPVEEK…DKSKPAKKPR (76 aa)) are disordered. The span at 206-221 (VEEKKSVRASKAKDEQ) shows a compositional bias: basic and acidic residues. The span at 231–242 (AKPSTATDVTNP) shows a compositional bias: polar residues. The segment covering 243–256 (TLKTPATARKAAAK) has biased composition (low complexity). Residues 258–269 (VKIEGETVDKSK) are compositionally biased toward basic and acidic residues.

Belongs to the complex I 24 kDa subunit family. [2Fe-2S] cluster serves as cofactor.

The catalysed reaction is a quinone + NADH + 5 H(+)(in) = a quinol + NAD(+) + 4 H(+)(out). Functionally, NDH-1 shuttles electrons from NADH, via FMN and iron-sulfur (Fe-S) centers, to quinones in the respiratory chain. The immediate electron acceptor for the enzyme in this species is believed to be ubiquinone. Couples the redox reaction to proton translocation (for every two electrons transferred, four hydrogen ions are translocated across the cytoplasmic membrane), and thus conserves the redox energy in a proton gradient. The protein is NADH-quinone oxidoreductase subunit E 1 (nuoE1) of Rhizobium meliloti (strain 1021) (Ensifer meliloti).